Consider the following 892-residue polypeptide: Translation initiation factor IF-2 (892 aa).

Composition is skewed to basic and acidic residues over residues 93 to 159 (VKRD…KDKV) and 166 to 216 (DMTK…EENK). The disordered stretch occupies residues 93–304 (VKRDPQEAER…SSLQQGFQKP (212 aa)). A compositionally biased stretch (basic residues) spans 254–269 (GRGRNAKAARPAKKGK). Over residues 270–282 (HAESKADREEARA) the composition is skewed to basic and acidic residues. One can recognise a tr-type G domain in the interval 391 to 560 (PRAPVVTIMG…LLQAEVLELK (170 aa)). A G1 region spans residues 400 to 407 (GHVDHGKT). Position 400–407 (400–407 (GHVDHGKT)) interacts with GTP. The G2 stretch occupies residues 425–429 (GITQH). A G3 region spans residues 446 to 449 (DTPG). GTP contacts are provided by residues 446-450 (DTPGH) and 500-503 (NKID). The tract at residues 500 to 503 (NKID) is G4. A G5 region spans residues 536 to 538 (SAK).

Belongs to the TRAFAC class translation factor GTPase superfamily. Classic translation factor GTPase family. IF-2 subfamily.

It localises to the cytoplasm. One of the essential components for the initiation of protein synthesis. Protects formylmethionyl-tRNA from spontaneous hydrolysis and promotes its binding to the 30S ribosomal subunits. Also involved in the hydrolysis of GTP during the formation of the 70S ribosomal complex. The protein is Translation initiation factor IF-2 of Salmonella gallinarum (strain 287/91 / NCTC 13346).